The chain runs to 391 residues: Cold-shock protein CS120 (391 aa).

17 tandem repeats follow at residues 9–31 (GEKK…DHKE), 49–62 (TGGA…AGTT), 72–94 (GEKK…DHQQ), 95–108 (TGGT…TGTA), 115–128 (TGGT…TGTA), 135–148 (TGGT…TGVT), 156–178 (GEKK…DHQQ), 179–192 (TGGT…TGTA), 199–212 (GGGT…TGMT), 220–242 (GEKK…DHQQ), 243–256 (TGGT…TGTA), 263–276 (GGGT…TGMT), 284–306 (GEKK…DHQQ), 307–320 (TGGA…TGTA), 327–340 (GGGT…AGVI), 350–363 (TGGT…TGTT), and 374–391 (GEKK…PGQH). Residues 9 to 391 (GEKKGIMEKI…KIKDKLPGQH (383 aa)) form a 6 X 23 AA approximate repeats region. Positions 21–33 (KLPGGHGDHKETA) are enriched in basic and acidic residues. The disordered stretch occupies residues 21–391 (KLPGGHGDHK…KIKDKLPGQH (371 aa)). Over residues 34 to 59 (GTHGHPGTATHGAPATGGAYGQQGHA) the composition is skewed to low complexity. The tract at residues 49 to 363 (TGGAYGQQGH…HGQHGHTGTT (315 aa)) is 11 X 14 AA approximate repeats. Residues 70-92 (HAGEKKGVMENIKDKLPGGHQDH) show a composition bias toward basic and acidic residues. Residues 93–145 (QQTGGTYGQQGHTGTATHGTPATGGTYGQQGHTGTATHGTPATGGTYGEQGHT) are compositionally biased toward low complexity. A compositionally biased stretch (basic and acidic residues) spans 155 to 176 (TGEKKGVMENIKEKLPGGHGDH). Positions 177-196 (QQTGGTYGQQGHTGTATHGT) are enriched in low complexity. The segment covering 219–240 (TGEKKGVMENIKDKLPGGHGDH) has biased composition (basic and acidic residues). Low complexity-rich tracts occupy residues 241-260 (QQTG…TQGT) and 272-282 (HTGMTGAGTHS). The span at 283 to 304 (TGEKKGVMENIKEKLPGGHSDH) shows a compositional bias: basic and acidic residues. Low complexity-rich tracts occupy residues 305-324 (QQTG…THGT) and 333-351 (QHGH…TATG). Gly residues predominate over residues 361–372 (GTTGTGTHGSDG). The segment covering 373 to 391 (IGEKKSLMDKIKDKLPGQH) has biased composition (basic and acidic residues).

Belongs to the plant dehydrin family.

Its function is as follows. May reduce intracellular freezing damage during winter by hydrogen-bonding to the lattice of the nascent ice crystals, thus modifying the structure and/or propagation of ice crystals. The chain is Cold-shock protein CS120 (CS120) from Triticum aestivum (Wheat).